The following is a 455-amino-acid chain: Tubulin alpha-1 chain (455 aa).

Glutamine 11, glutamate 75, serine 144, glycine 148, threonine 149, threonine 183, asparagine 210, and asparagine 232 together coordinate GTP. Glutamate 75 contacts Mg(2+). Glutamate 258 is a catalytic residue.

This sequence belongs to the tubulin family. As to quaternary structure, dimer of alpha and beta chains. A typical microtubule is a hollow water-filled tube with an outer diameter of 25 nm and an inner diameter of 15 nM. Alpha-beta heterodimers associate head-to-tail to form protofilaments running lengthwise along the microtubule wall with the beta-tubulin subunit facing the microtubule plus end conferring a structural polarity. Microtubules usually have 13 protofilaments but different protofilament numbers can be found in some organisms and specialized cells. Mg(2+) is required as a cofactor.

The protein resides in the cytoplasm. It is found in the cytoskeleton. It catalyses the reaction GTP + H2O = GDP + phosphate + H(+). Functionally, tubulin is the major constituent of microtubules, a cylinder consisting of laterally associated linear protofilaments composed of alpha- and beta-tubulin heterodimers. Microtubules grow by the addition of GTP-tubulin dimers to the microtubule end, where a stabilizing cap forms. Below the cap, tubulin dimers are in GDP-bound state, owing to GTPase activity of alpha-tubulin. In Schizosaccharomyces pombe (strain 972 / ATCC 24843) (Fission yeast), this protein is Tubulin alpha-1 chain (nda2).